The chain runs to 161 residues: Transcriptional repressor NrdR (161 aa).

Positions M1–T11 are enriched in polar residues. Positions M1–E20 are disordered. A zinc finger spans residues C3–C34. The ATP-cone domain occupies L49–D139.

The protein belongs to the NrdR family. Zn(2+) is required as a cofactor.

Functionally, negatively regulates transcription of bacterial ribonucleotide reductase nrd genes and operons by binding to NrdR-boxes. In Bradyrhizobium sp. (strain BTAi1 / ATCC BAA-1182), this protein is Transcriptional repressor NrdR.